We begin with the raw amino-acid sequence, 88 residues long: UPF0298 protein BcerKBAB4_3759 (88 aa).

Belongs to the UPF0298 family.

Its subcellular location is the cytoplasm. The polypeptide is UPF0298 protein BcerKBAB4_3759 (Bacillus mycoides (strain KBAB4) (Bacillus weihenstephanensis)).